The primary structure comprises 200 residues: 3-isopropylmalate dehydratase small subunit (200 aa).

The protein belongs to the LeuD family. LeuD type 1 subfamily. In terms of assembly, heterodimer of LeuC and LeuD.

It catalyses the reaction (2R,3S)-3-isopropylmalate = (2S)-2-isopropylmalate. It participates in amino-acid biosynthesis; L-leucine biosynthesis; L-leucine from 3-methyl-2-oxobutanoate: step 2/4. Functionally, catalyzes the isomerization between 2-isopropylmalate and 3-isopropylmalate, via the formation of 2-isopropylmaleate. This Vibrio cholerae serotype O1 (strain ATCC 39541 / Classical Ogawa 395 / O395) protein is 3-isopropylmalate dehydratase small subunit.